Reading from the N-terminus, the 547-residue chain is CTP synthase (547 aa).

Residues 1–265 are amidoligase domain; the sequence is MARYIFITGG…DQAVLDAFDI (265 aa). Serine 13 is a binding site for CTP. Serine 13 contacts UTP. Residues 14 to 19 and aspartate 71 contribute to the ATP site; that span reads SLGKGL. Positions 71 and 139 each coordinate Mg(2+). CTP contacts are provided by residues 146 to 148, 186 to 191, and lysine 222; these read DIE and KTKPTQ. Residues 186–191 and lysine 222 each bind UTP; that span reads KTKPTQ. In terms of domain architecture, Glutamine amidotransferase type-1 spans 291 to 546; that stretch reads KVAIVGKYTQ…IRAAKENSRL (256 aa). Glycine 353 lines the L-glutamine pocket. Catalysis depends on cysteine 380, which acts as the Nucleophile; for glutamine hydrolysis. L-glutamine is bound by residues 381 to 384, glutamate 404, and arginine 474; that span reads LGMQ. Residues histidine 519 and glutamate 521 contribute to the active site.

This sequence belongs to the CTP synthase family. Homotetramer.

It carries out the reaction UTP + L-glutamine + ATP + H2O = CTP + L-glutamate + ADP + phosphate + 2 H(+). The enzyme catalyses L-glutamine + H2O = L-glutamate + NH4(+). The catalysed reaction is UTP + NH4(+) + ATP = CTP + ADP + phosphate + 2 H(+). Its pathway is pyrimidine metabolism; CTP biosynthesis via de novo pathway; CTP from UDP: step 2/2. With respect to regulation, allosterically activated by GTP, when glutamine is the substrate; GTP has no effect on the reaction when ammonia is the substrate. The allosteric effector GTP functions by stabilizing the protein conformation that binds the tetrahedral intermediate(s) formed during glutamine hydrolysis. Inhibited by the product CTP, via allosteric rather than competitive inhibition. Functionally, catalyzes the ATP-dependent amination of UTP to CTP with either L-glutamine or ammonia as the source of nitrogen. Regulates intracellular CTP levels through interactions with the four ribonucleotide triphosphates. In Roseobacter denitrificans (strain ATCC 33942 / OCh 114) (Erythrobacter sp. (strain OCh 114)), this protein is CTP synthase.